Reading from the N-terminus, the 120-residue chain is Chaperonin GroEL (120 aa).

Residue 23 to 27 coordinates ATP; it reads DGTTT.

This sequence belongs to the chaperonin (HSP60) family. As to quaternary structure, forms a cylinder of 14 subunits composed of two heptameric rings stacked back-to-back. Interacts with the co-chaperonin GroES.

The protein resides in the cytoplasm. It catalyses the reaction ATP + H2O + a folded polypeptide = ADP + phosphate + an unfolded polypeptide.. Together with its co-chaperonin GroES, plays an essential role in assisting protein folding. The GroEL-GroES system forms a nano-cage that allows encapsulation of the non-native substrate proteins and provides a physical environment optimized to promote and accelerate protein folding. The protein is Chaperonin GroEL of Mycobacterium gordonae.